Consider the following 366-residue polypeptide: 3-dehydroquinate synthase (366 aa).

Residues 75 to 80, 109 to 113, 133 to 134, K146, K155, and 173 to 176 contribute to the NAD(+) site; these read DGEQYK, GVIGD, TT, and CLST. E188, H251, and H268 together coordinate Zn(2+).

It belongs to the sugar phosphate cyclases superfamily. Dehydroquinate synthase family. NAD(+) is required as a cofactor. Requires Co(2+) as cofactor. Zn(2+) serves as cofactor.

It localises to the cytoplasm. The enzyme catalyses 7-phospho-2-dehydro-3-deoxy-D-arabino-heptonate = 3-dehydroquinate + phosphate. It functions in the pathway metabolic intermediate biosynthesis; chorismate biosynthesis; chorismate from D-erythrose 4-phosphate and phosphoenolpyruvate: step 2/7. Its function is as follows. Catalyzes the conversion of 3-deoxy-D-arabino-heptulosonate 7-phosphate (DAHP) to dehydroquinate (DHQ). The protein is 3-dehydroquinate synthase of Vibrio parahaemolyticus serotype O3:K6 (strain RIMD 2210633).